Here is a 439-residue protein sequence, read N- to C-terminus: GTPase Obg (439 aa).

An Obg domain is found at 5 to 164 (TDFFDQATIV…LTLELELKML (160 aa)). An OBG-type G domain is found at 165–335 (ADVGLVGFPN…LLRRVADLLR (171 aa)). GTP contacts are provided by residues 171–178 (GFPNAGKS), 196–200 (FTTLT), 217–220 (DIPG), 287–290 (NKAD), and 316–318 (SAA). Mg(2+)-binding residues include Ser-178 and Thr-198. Residues 356–433 (LPEVDENAFT…IGRAELVWDD (78 aa)) form the OCT domain.

The protein belongs to the TRAFAC class OBG-HflX-like GTPase superfamily. OBG GTPase family. Monomer. The cofactor is Mg(2+).

Its subcellular location is the cytoplasm. Functionally, an essential GTPase which binds GTP, GDP and possibly (p)ppGpp with moderate affinity, with high nucleotide exchange rates and a fairly low GTP hydrolysis rate. Plays a role in control of the cell cycle, stress response, ribosome biogenesis and in those bacteria that undergo differentiation, in morphogenesis control. In Chloroflexus aurantiacus (strain ATCC 29364 / DSM 637 / Y-400-fl), this protein is GTPase Obg.